The chain runs to 148 residues: 3-dehydroquinate dehydratase (148 aa).

Residue tyrosine 24 is the Proton acceptor of the active site. Substrate contacts are provided by asparagine 80, histidine 86, and aspartate 93. The Proton donor role is filled by histidine 106. Substrate-binding positions include 107–108 (IS) and arginine 117.

It belongs to the type-II 3-dehydroquinase family. In terms of assembly, homododecamer.

It catalyses the reaction 3-dehydroquinate = 3-dehydroshikimate + H2O. The protein operates within metabolic intermediate biosynthesis; chorismate biosynthesis; chorismate from D-erythrose 4-phosphate and phosphoenolpyruvate: step 3/7. Its function is as follows. Catalyzes a trans-dehydration via an enolate intermediate. The protein is 3-dehydroquinate dehydratase of Acidovorax sp. (strain JS42).